The primary structure comprises 356 residues: Putative [LysW]-L-2-aminoadipate/[LysW]-L-glutamate phosphate reductase (356 aa).

An NADP(+)-binding site is contributed by 11-14 (SGYT). The active site involves C157. N323 contributes to the NADP(+) binding site.

The protein belongs to the NAGSA dehydrogenase family. Type 1 subfamily. LysY sub-subfamily.

It is found in the cytoplasm. The enzyme catalyses [amino-group carrier protein]-C-terminal-N-(1-carboxy-5-oxopentan-1-yl)-L-glutamine + phosphate + NADP(+) = [amino-group carrier protein]-C-terminal-N-(1-carboxy-5-phosphooxy-5-oxopentan-1-yl)-L-glutamine + NADPH + H(+). It carries out the reaction [amino-group carrier protein]-C-terminal-gamma-(L-glutamyl-5-semialdehyde)-L-glutamate + phosphate + NADP(+) = [amino-group carrier protein]-C-terminal-gamma-(5-phospho-L-glutamyl)-L-glutamate + NADPH + H(+). Its pathway is amino-acid biosynthesis; L-lysine biosynthesis via AAA pathway; L-lysine from L-alpha-aminoadipate (Thermus route): step 3/5. It participates in amino-acid biosynthesis; L-arginine biosynthesis. Its function is as follows. Involved in both the arginine and lysine biosynthetic pathways. The protein is Putative [LysW]-L-2-aminoadipate/[LysW]-L-glutamate phosphate reductase of Ignicoccus hospitalis (strain KIN4/I / DSM 18386 / JCM 14125).